Reading from the N-terminus, the 541-residue chain is Phosphatidylethanolamine transferase Mcr-1 (541 aa).

Topologically, residues 1 to 14 are cytoplasmic; that stretch reads MMQHTSVWYRRSVS. Residues 15–35 traverse the membrane as a helical segment; it reads PFVLVASVAVFLTATANLTFF. At 36–47 the chain is on the periplasmic side; the sequence is DKISQTYPIADN. Residues 48–68 form a helical membrane-spanning segment; the sequence is LGFVLTIAVVLFGAMLLITTL. Topologically, residues 69 to 73 are cytoplasmic; the sequence is LSSYR. A helical membrane pass occupies residues 74–94; the sequence is YVLKPVLILLLIMGAVTSYFT. Residues 95-122 are Periplasmic-facing; it reads DTYGTVYDTTMLQNALQTDQAETKDLLN. Residues 123–143 traverse the membrane as a helical segment; that stretch reads AAFIMRIIGLGVLPSLLVAFV. Topologically, residues 144 to 157 are cytoplasmic; sequence KVDYPTWGKGLMRR. A helical membrane pass occupies residues 158 to 178; sequence LGLIVASLALILLPVVAFSSH. Residues 179–541 lie on the Periplasmic side of the membrane; the sequence is YASFFRVHKP…KVKDRTAFIR (363 aa). Zn(2+) is bound by residues glutamate 246 and threonine 285. 3 disulfide bridges follow: cysteine 281–cysteine 291, cysteine 356–cysteine 364, and cysteine 414–cysteine 422. Threonine 285 carries the phosphothreonine modification. Zn(2+) is bound by residues aspartate 465 and histidine 466.

This sequence belongs to the phosphoethanolamine transferase family. As to quaternary structure, monomer. Post-translationally, phosphorylated at Thr-285; may represent an intermediate in the catalytic mechanism.

It localises to the cell inner membrane. The catalysed reaction is lipid A (E. coli) + a 1,2-diacyl-sn-glycero-3-phosphoethanolamine + H(+) = lipid A 4'-(2-aminoethyl diphosphate) (E. coli) + a 1,2-diacyl-sn-glycerol. EDTA may inhibit activity. May be inhibited by ethanolamine. Its function is as follows. Probably catalyzes the addition of a phosphoethanolamine moiety to lipid A. Phosphoethanolamine modification of lipid A confers polymyxin resistance. Confers resistance to polymyxin-type antibiotics such as colistin; in the E.coli strain W3110. The chain is Phosphatidylethanolamine transferase Mcr-1 (mcr1) from Escherichia coli.